The chain runs to 169 residues: Major fimbrial subunit SMF-1 (169 aa).

An N-terminal signal peptide occupies residues 1–11 (MLAAAPLAANA).

This sequence belongs to the fimbrial protein family.

It localises to the fimbrium. Its function is as follows. Involved in adherence to eukaryotic epithelial cells and abiotic surfaces. Mediates agglutination of animal red blood cells. The polypeptide is Major fimbrial subunit SMF-1 (Stenotrophomonas maltophilia (strain K279a)).